Consider the following 1406-residue polypeptide: EF-hand calcium-binding domain-containing protein 5 (1406 aa).

A disordered region spans residues asparagine 255–valine 655. Polar residues-rich tracts occupy residues leucine 258–glycine 294, arginine 322–glycine 334, arginine 342–glycine 354, arginine 362–arginine 373, arginine 382–arginine 393, arginine 402–glycine 414, arginine 422–glycine 434, and arginine 442–glutamate 464. Over residues glutamine 465–histidine 477 the composition is skewed to basic and acidic residues. Low complexity predominate over residues aspartate 501–glycine 513. Over residues glutamine 564–aspartate 577 the composition is skewed to acidic residues. Basic and acidic residues-rich tracts occupy residues serine 578–proline 598 and serine 638–valine 655. The 36-residue stretch at arginine 773–glycine 808 folds into the EF-hand domain. The Ca(2+) site is built by aspartate 786, aspartate 788, serine 790, and glutamate 797.

The polypeptide is EF-hand calcium-binding domain-containing protein 5 (Efcab5) (Mus musculus (Mouse)).